A 320-amino-acid polypeptide reads, in one-letter code: Probable cell division protein WhiA (320 aa).

A DNA-binding region (H-T-H motif) is located at residues 276-310 (TLKELGEMVESGKVSKSGVNHRLRKIDELAEKLRA).

The protein belongs to the WhiA family.

Its function is as follows. Involved in cell division and chromosome segregation. The polypeptide is Probable cell division protein WhiA (Halalkalibacterium halodurans (strain ATCC BAA-125 / DSM 18197 / FERM 7344 / JCM 9153 / C-125) (Bacillus halodurans)).